A 577-amino-acid chain; its full sequence is Anthranilate synthase alpha subunit 1, chloroplastic (577 aa).

A chloroplast-targeting transit peptide spans 1–34 (MASLVLSLRIAPSTPPLGLGGGRFRGRRGAVACR).

The protein belongs to the anthranilate synthase component I family. Heterotetramer consisting of two non-identical subunits: a beta subunit and a large alpha subunit.

It is found in the plastid. The protein localises to the chloroplast. The catalysed reaction is chorismate + L-glutamine = anthranilate + pyruvate + L-glutamate + H(+). It participates in amino-acid biosynthesis; L-tryptophan biosynthesis; L-tryptophan from chorismate: step 1/5. Its activity is regulated as follows. Feedback inhibition by tryptophan. Functionally, part of a heterotetrameric complex that catalyzes the two-step biosynthesis of anthranilate, an intermediate in the biosynthesis of L-tryptophan. In the first step, the glutamine-binding beta subunit of anthranilate synthase (AS) provides the glutamine amidotransferase activity which generates ammonia as a substrate that, along with chorismate, is used in the second step, catalyzed by the large alpha subunit of AS to produce anthranilate. This chain is Anthranilate synthase alpha subunit 1, chloroplastic (ASA1), found in Oryza sativa subsp. indica (Rice).